Reading from the N-terminus, the 401-residue chain is cAMP-dependent protein kinase type II-alpha regulatory subunit (401 aa).

Position 2 is an N-acetylserine (Ser-2). Residues 2–135 form a dimerization and phosphorylation region; it reads SHIQIPPGLT…RLQEACKDIL (134 aa). Positions 43–65 are disordered; the sequence is ARSRASTPPAAPPSGSQDFDPGA. Residues 46 to 58 show a composition bias toward low complexity; that stretch reads RASTPPAAPPSGS. Phosphoserine occurs at positions 48, 75, and 77. Ser-96 is subject to Phosphoserine; by PKA. 3',5'-cyclic AMP-binding positions include 136-257, Glu-205, Arg-214, 258-401, Glu-335, and Arg-344; these read LFKN…ESVP and LLKS…DPGQ. Thr-212 is subject to Phosphothreonine; by PDPK1. Ser-347 and Ser-392 each carry phosphoserine.

This sequence belongs to the cAMP-dependent kinase regulatory chain family. As to quaternary structure, the inactive form of the enzyme is composed of two regulatory chains and two catalytic chains. Activation by cAMP produces two active catalytic monomers and a regulatory dimer that binds four cAMP molecules. Interacts with AKAP4 and CBFA2T3. Interacts with the phosphorylated form of PJA2. Interacts with MYRIP; this interaction may link PKA to components of the exocytosis machinery, thus facilitating exocytosis, including insulin release. Forms a complex composed of PRKAR2A, GSK3B and GSKIP through GSKIP interaction; facilitates PKA-induced phosphorylation and regulates GSK3B activity. Interacts with ADCY8; inhibits adenylate cyclase activity through PKA phosphorylation. Post-translationally, a second phosphorylation site has not been located. In terms of processing, phosphorylation of Thr-212 by PDPK1 seems to attenuate the activity of PKA, perhaps by strengthening interaction between the regulatory and the catalytic subunits. In terms of tissue distribution, four types of regulatory chains are found: I-alpha, I-beta, II-alpha, and II-beta. Their expression varies among tissues and is in some cases constitutive and in others inducible.

The protein localises to the cytoplasm. It localises to the cell membrane. Regulatory subunit of the cAMP-dependent protein kinases involved in cAMP signaling in cells. Type II regulatory chains mediate membrane association by binding to anchoring proteins, including the MAP2 kinase. In Bos taurus (Bovine), this protein is cAMP-dependent protein kinase type II-alpha regulatory subunit (PRKAR2A).